Here is a 184-residue protein sequence, read N- to C-terminus: ATP synthase subunit b, chloroplastic (184 aa).

Residues leucine 27–leucine 49 traverse the membrane as a helical segment.

This sequence belongs to the ATPase B chain family. As to quaternary structure, F-type ATPases have 2 components, F(1) - the catalytic core - and F(0) - the membrane proton channel. F(1) has five subunits: alpha(3), beta(3), gamma(1), delta(1), epsilon(1). F(0) has four main subunits: a(1), b(1), b'(1) and c(10-14). The alpha and beta chains form an alternating ring which encloses part of the gamma chain. F(1) is attached to F(0) by a central stalk formed by the gamma and epsilon chains, while a peripheral stalk is formed by the delta, b and b' chains.

Its subcellular location is the plastid. It is found in the chloroplast thylakoid membrane. Functionally, f(1)F(0) ATP synthase produces ATP from ADP in the presence of a proton or sodium gradient. F-type ATPases consist of two structural domains, F(1) containing the extramembraneous catalytic core and F(0) containing the membrane proton channel, linked together by a central stalk and a peripheral stalk. During catalysis, ATP synthesis in the catalytic domain of F(1) is coupled via a rotary mechanism of the central stalk subunits to proton translocation. Component of the F(0) channel, it forms part of the peripheral stalk, linking F(1) to F(0). In Cucumis sativus (Cucumber), this protein is ATP synthase subunit b, chloroplastic.